The chain runs to 256 residues: Leucyl/phenylalanyl-tRNA--protein transferase (256 aa).

The segment at 232-256 (DGCTGASRHGPGADMRRGDMSREST) is disordered. Positions 245-256 (DMRRGDMSREST) are enriched in basic and acidic residues.

Belongs to the L/F-transferase family.

It is found in the cytoplasm. The catalysed reaction is N-terminal L-lysyl-[protein] + L-leucyl-tRNA(Leu) = N-terminal L-leucyl-L-lysyl-[protein] + tRNA(Leu) + H(+). The enzyme catalyses N-terminal L-arginyl-[protein] + L-leucyl-tRNA(Leu) = N-terminal L-leucyl-L-arginyl-[protein] + tRNA(Leu) + H(+). It catalyses the reaction L-phenylalanyl-tRNA(Phe) + an N-terminal L-alpha-aminoacyl-[protein] = an N-terminal L-phenylalanyl-L-alpha-aminoacyl-[protein] + tRNA(Phe). In terms of biological role, functions in the N-end rule pathway of protein degradation where it conjugates Leu, Phe and, less efficiently, Met from aminoacyl-tRNAs to the N-termini of proteins containing an N-terminal arginine or lysine. This is Leucyl/phenylalanyl-tRNA--protein transferase from Chromohalobacter salexigens (strain ATCC BAA-138 / DSM 3043 / CIP 106854 / NCIMB 13768 / 1H11).